The sequence spans 416 residues: UDP-N-acetylmuramoylalanine--D-glutamate ligase (416 aa).

104-110 (GSNGKST) is an ATP binding site.

Belongs to the MurCDEF family.

The protein localises to the cytoplasm. The catalysed reaction is UDP-N-acetyl-alpha-D-muramoyl-L-alanine + D-glutamate + ATP = UDP-N-acetyl-alpha-D-muramoyl-L-alanyl-D-glutamate + ADP + phosphate + H(+). It functions in the pathway cell wall biogenesis; peptidoglycan biosynthesis. In terms of biological role, cell wall formation. Catalyzes the addition of glutamate to the nucleotide precursor UDP-N-acetylmuramoyl-L-alanine (UMA). The chain is UDP-N-acetylmuramoylalanine--D-glutamate ligase from Francisella tularensis subsp. holarctica (strain FTNF002-00 / FTA).